Consider the following 346-residue polypeptide: Growth hormone-inducible transmembrane protein (346 aa).

A mitochondrion-targeting transit peptide spans 1-45 (MLAARLVCLRTLPSRVFQPTFITKASPLVKNSITKNQWLVTPSRE). At 46 to 83 (YATKTRIRTHRGKTGQELKEAALEPSMEKIFKIDQMGR) the chain is on the mitochondrial matrix side. Residues 84–104 (WFVAGGAAVGLGALCYYGLGM) traverse the membrane as a helical segment. Residues 105-126 (SNEIGAIEKAVIWPQYVKDRIH) lie on the Mitochondrial intermembrane side of the membrane. A helical membrane pass occupies residues 127–147 (STYMYLAGSIGLTALSALAVA). Topologically, residues 148–160 (RTPALMNFMMTGS) are mitochondrial matrix. A helical transmembrane segment spans residues 161–181 (WVTIGATFAAMIGAGMLVHSI). The Mitochondrial intermembrane segment spans residues 182 to 191 (SYEQSPGPKH). Residues 192–212 (LAWMLHSGVMGAVVAPLTILG) form a helical membrane-spanning segment. Over 213–214 (GP) the chain is Mitochondrial matrix. Residues 215–235 (LLLRAAWYTAGIVGGLSTVAM) traverse the membrane as a helical segment. Over 236–245 (CAPSEKFLNM) the chain is Mitochondrial intermembrane. A helical transmembrane segment spans residues 246 to 266 (GAPLGVGLGLVFASSLGSMFL). Over 267-272 (PPTSVA) the chain is Mitochondrial matrix. The helical transmembrane segment at 273-293 (GATLYSVAMYGGLVLFSMFLL) threads the bilayer. Topologically, residues 294-346 (YDTQKVIKRAEITPMYGAQKYDPINSMLTIYMDTLNIFMRVATMLATGSNRKK) are mitochondrial intermembrane.

Belongs to the BI1 family. Interacts with LETM1 and AFG3L2. Undergoes AFG3L2-mediated proteolytic degradation, upon hyperpolarization of mitochondria.

It is found in the mitochondrion inner membrane. It carries out the reaction Ca(2+)(in) + 2 H(+)(out) = Ca(2+)(out) + 2 H(+)(in). The enzyme catalyses K(+)(in) + H(+)(out) = K(+)(out) + H(+)(in). In terms of biological role, plays an important role in maintenance of mitochondrial morphology and in mediating either calcium or potassium/proton antiport. Mediates proton-dependent calcium efflux from mitochondrion. Also functions as an electroneutral mitochondrial proton/potassium exchanger. Required for the mitochondrial tubular network and cristae organization. Involved in apoptotic release of cytochrome c. Inhibits AFG3L2 proteolytic activity, stimulating respiration and stabilizing respiratory enzymes in actively respiring mitochondria. However, when mitochondria become hyperpolarized, GHITM loses its inhibitory activity toward AFG3L2 and the now active AFG3L2 turns first on GHITM and, if hyperpolarization persists, on other proteins of the mitochondria, leading to a broad remodeling of the mitochondrial proteome. In Mus musculus (Mouse), this protein is Growth hormone-inducible transmembrane protein (Ghitm).